Reading from the N-terminus, the 288-residue chain is Bifunctional protein FolD 1 (288 aa).

NADP(+)-binding positions include 170 to 172 and isoleucine 236; that span reads GPG.

Belongs to the tetrahydrofolate dehydrogenase/cyclohydrolase family. As to quaternary structure, homodimer.

The catalysed reaction is (6R)-5,10-methylene-5,6,7,8-tetrahydrofolate + NADP(+) = (6R)-5,10-methenyltetrahydrofolate + NADPH. It carries out the reaction (6R)-5,10-methenyltetrahydrofolate + H2O = (6R)-10-formyltetrahydrofolate + H(+). The protein operates within one-carbon metabolism; tetrahydrofolate interconversion. Functionally, catalyzes the oxidation of 5,10-methylenetetrahydrofolate to 5,10-methenyltetrahydrofolate and then the hydrolysis of 5,10-methenyltetrahydrofolate to 10-formyltetrahydrofolate. This chain is Bifunctional protein FolD 1, found in Deinococcus geothermalis (strain DSM 11300 / CIP 105573 / AG-3a).